The following is a 188-amino-acid chain: MTEWRQQWQAILHEFRKQAPLGRGDVVVIGCSTSEVLGERIGTAGSMDVAAMLFAELDAWRRETGIALAFQCCEHLNRALVVERETAKTHGLEIVSVVPVPKAGGAMAAYAYRKFADPVVVEAIRADAGIDIGHTLIGMHLKPVAVPVRVSVKHIGSACVTLAKTRPKLIGGARAVYSLENPNDSCSF.

Belongs to the UPF0340 family.

The polypeptide is UPF0340 protein GK3370 (Geobacillus kaustophilus (strain HTA426)).